A 136-amino-acid polypeptide reads, in one-letter code: MRHGVKTSKLQRNASHRRALLANQACSLILNGRITTTLAKAKALRPYVEKLITLAKRGDVHSRRLATATIHNTTAVKRLFDEIAPLCAERKGGYTRIVKLGQRLTDSALVAMIEIIDLPREAAEKEEAPATTEATA.

This sequence belongs to the bacterial ribosomal protein bL17 family. In terms of assembly, part of the 50S ribosomal subunit. Contacts protein L32.

This Akkermansia muciniphila (strain ATCC BAA-835 / DSM 22959 / JCM 33894 / BCRC 81048 / CCUG 64013 / CIP 107961 / Muc) protein is Large ribosomal subunit protein bL17.